The primary structure comprises 624 residues: DNA mismatch repair protein MutL (624 aa).

The protein belongs to the DNA mismatch repair MutL/HexB family.

In terms of biological role, this protein is involved in the repair of mismatches in DNA. It is required for dam-dependent methyl-directed DNA mismatch repair. May act as a 'molecular matchmaker', a protein that promotes the formation of a stable complex between two or more DNA-binding proteins in an ATP-dependent manner without itself being part of a final effector complex. The sequence is that of DNA mismatch repair protein MutL from Xanthomonas campestris pv. campestris (strain B100).